A 207-amino-acid polypeptide reads, in one-letter code: Anthranilate synthase component II (207 aa).

Residues 17 to 207 (RVLFVDNFDS…DVIRNFLAGL (191 aa)) enclose the Glutamine amidotransferase type-1 domain. Residue 66-68 (GPG) participates in L-glutamine binding. C96 serves as the catalytic Nucleophile; for GATase activity. 146 to 147 (SL) lines the L-glutamine pocket. Catalysis depends on residues H187 and E189.

In terms of assembly, tetramer of two components I and two components II.

The enzyme catalyses chorismate + L-glutamine = anthranilate + pyruvate + L-glutamate + H(+). Its pathway is amino-acid biosynthesis; L-tryptophan biosynthesis; L-tryptophan from chorismate: step 1/5. The chain is Anthranilate synthase component II (trpG1) from Haloarcula marismortui (strain ATCC 43049 / DSM 3752 / JCM 8966 / VKM B-1809) (Halobacterium marismortui).